The following is a 205-amino-acid chain: LexA repressor (205 aa).

The H-T-H motif DNA-binding region spans 28-48; the sequence is RAEIAASLGFRSPNAAEEHLK. Active-site for autocatalytic cleavage activity residues include Ser122 and Lys159.

The protein belongs to the peptidase S24 family. Homodimer.

It carries out the reaction Hydrolysis of Ala-|-Gly bond in repressor LexA.. Represses a number of genes involved in the response to DNA damage (SOS response), including recA and lexA. Binds to the 16 bp palindromic sequence 5'-CTGTATATATATACAG-3'. In the presence of single-stranded DNA, RecA interacts with LexA causing an autocatalytic cleavage which disrupts the DNA-binding part of LexA, leading to derepression of the SOS regulon and eventually DNA repair. In Providencia rettgeri, this protein is LexA repressor.